A 333-amino-acid polypeptide reads, in one-letter code: Phenylalanine--tRNA ligase alpha subunit (333 aa).

Mg(2+) is bound at residue E254.

This sequence belongs to the class-II aminoacyl-tRNA synthetase family. Phe-tRNA synthetase alpha subunit type 1 subfamily. As to quaternary structure, tetramer of two alpha and two beta subunits. It depends on Mg(2+) as a cofactor.

Its subcellular location is the cytoplasm. It catalyses the reaction tRNA(Phe) + L-phenylalanine + ATP = L-phenylalanyl-tRNA(Phe) + AMP + diphosphate + H(+). The protein is Phenylalanine--tRNA ligase alpha subunit of Xylella fastidiosa (strain M12).